Consider the following 362-residue polypeptide: PDZ and LIM domain protein 3 (362 aa).

The PDZ domain occupies 1–84; that stretch reads MPQNVVLPGP…QLCLKIDRAE (84 aa). Phosphoserine occurs at positions 18, 92, and 263. The disordered stretch occupies residues 261-282; sequence DGSDDRPAGTRSVRPVTKVHGG. An LIM zinc-binding domain is found at 290–349; sequence PLCDKCGSGIVGAVVKARDKYRHPECFVCADCNLNLKQKGYFFVEGELYCEMHARARTRP.

As to quaternary structure, interacts with ACTN2. Forms a heterodimer with PDLIM4 (via LIM domain). As to expression, highly expressed in skeletal muscle and at low levels in the heart.

It localises to the cytoplasm. It is found in the myofibril. Its subcellular location is the sarcomere. The protein resides in the z line. In terms of biological role, may play a role in the organization of actin filament arrays within muscle cells. The protein is PDZ and LIM domain protein 3 (Pdlim3) of Rattus norvegicus (Rat).